The primary structure comprises 351 residues: Ceramide hydroxylase (351 aa).

The next 4 membrane-spanning stretches (helical) occupy residues 26 to 46 (AAIY…GFLI), 47 to 67 (AATT…MLAL), 141 to 161 (GFLF…AILI), and 204 to 224 (VACW…VVPV).

The protein belongs to the fatty acid desaturase type 1 family.

Its subcellular location is the cell inner membrane. It participates in lipid metabolism; sphingolipid metabolism. Functionally, involved in de novo bacterial ceramide synthesis. This chain is Ceramide hydroxylase, found in Caulobacter vibrioides (strain NA1000 / CB15N) (Caulobacter crescentus).